Consider the following 297-residue polypeptide: Phosphatidylserine decarboxylase proenzyme (297 aa).

Residues D100, H157, and S263 each act as charge relay system; for autoendoproteolytic cleavage activity in the active site. Residue S263 is the Schiff-base intermediate with substrate; via pyruvic acid; for decarboxylase activity of the active site. A Pyruvic acid (Ser); by autocatalysis modification is found at S263.

The protein belongs to the phosphatidylserine decarboxylase family. PSD-B subfamily. Prokaryotic type I sub-subfamily. In terms of assembly, heterodimer of a large membrane-associated beta subunit and a small pyruvoyl-containing alpha subunit. It depends on pyruvate as a cofactor. In terms of processing, is synthesized initially as an inactive proenzyme. Formation of the active enzyme involves a self-maturation process in which the active site pyruvoyl group is generated from an internal serine residue via an autocatalytic post-translational modification. Two non-identical subunits are generated from the proenzyme in this reaction, and the pyruvate is formed at the N-terminus of the alpha chain, which is derived from the carboxyl end of the proenzyme. The autoendoproteolytic cleavage occurs by a canonical serine protease mechanism, in which the side chain hydroxyl group of the serine supplies its oxygen atom to form the C-terminus of the beta chain, while the remainder of the serine residue undergoes an oxidative deamination to produce ammonia and the pyruvoyl prosthetic group on the alpha chain. During this reaction, the Ser that is part of the protease active site of the proenzyme becomes the pyruvoyl prosthetic group, which constitutes an essential element of the active site of the mature decarboxylase.

It localises to the cell membrane. The catalysed reaction is a 1,2-diacyl-sn-glycero-3-phospho-L-serine + H(+) = a 1,2-diacyl-sn-glycero-3-phosphoethanolamine + CO2. The protein operates within phospholipid metabolism; phosphatidylethanolamine biosynthesis; phosphatidylethanolamine from CDP-diacylglycerol: step 2/2. Its function is as follows. Catalyzes the formation of phosphatidylethanolamine (PtdEtn) from phosphatidylserine (PtdSer). This chain is Phosphatidylserine decarboxylase proenzyme, found in Haemophilus ducreyi (strain 35000HP / ATCC 700724).